A 369-amino-acid polypeptide reads, in one-letter code: Glutamate 5-kinase (369 aa).

Residue lysine 9 participates in ATP binding. Substrate contacts are provided by serine 49, aspartate 136, and asparagine 148. ATP is bound by residues 168-169 (TD) and 210-216 (TGGMLTK). Residues 275 to 355 (RGSVYVDEGA…KGVFIHRDDW (81 aa)) form the PUA domain.

It belongs to the glutamate 5-kinase family.

The protein resides in the cytoplasm. It catalyses the reaction L-glutamate + ATP = L-glutamyl 5-phosphate + ADP. It participates in amino-acid biosynthesis; L-proline biosynthesis; L-glutamate 5-semialdehyde from L-glutamate: step 1/2. Its function is as follows. Catalyzes the transfer of a phosphate group to glutamate to form L-glutamate 5-phosphate. The polypeptide is Glutamate 5-kinase (Neisseria meningitidis serogroup C / serotype 2a (strain ATCC 700532 / DSM 15464 / FAM18)).